The primary structure comprises 82 residues: DNA-directed RNA polymerase subunit omega (82 aa).

The protein belongs to the RNA polymerase subunit omega family. In cyanobacteria the RNAP catalytic core is composed of 2 alpha, 1 beta, 1 beta', 1 gamma and 1 omega subunit. When a sigma factor is associated with the core the holoenzyme is formed, which can initiate transcription.

It carries out the reaction RNA(n) + a ribonucleoside 5'-triphosphate = RNA(n+1) + diphosphate. Its function is as follows. Promotes RNA polymerase assembly. Latches the N- and C-terminal regions of the beta' subunit thereby facilitating its interaction with the beta and alpha subunits. The chain is DNA-directed RNA polymerase subunit omega from Synechococcus sp. (strain CC9902).